Reading from the N-terminus, the 279-residue chain is Thymidylate synthase (279 aa).

Arg29 lines the dUMP pocket. His59 is a binding site for (6R)-5,10-methylene-5,6,7,8-tetrahydrofolate. 134 to 135 contributes to the dUMP binding site; the sequence is RR. Cys154 (nucleophile) is an active-site residue. Residues 181 to 184, Asn192, and 222 to 224 contribute to the dUMP site; these read RSAD and HIY. A (6R)-5,10-methylene-5,6,7,8-tetrahydrofolate-binding site is contributed by Asp184. Ala278 contacts (6R)-5,10-methylene-5,6,7,8-tetrahydrofolate.

It belongs to the thymidylate synthase family. Bacterial-type ThyA subfamily. Homodimer.

Its subcellular location is the cytoplasm. The enzyme catalyses dUMP + (6R)-5,10-methylene-5,6,7,8-tetrahydrofolate = 7,8-dihydrofolate + dTMP. It functions in the pathway pyrimidine metabolism; dTTP biosynthesis. Catalyzes the reductive methylation of 2'-deoxyuridine-5'-monophosphate (dUMP) to 2'-deoxythymidine-5'-monophosphate (dTMP) while utilizing 5,10-methylenetetrahydrofolate (mTHF) as the methyl donor and reductant in the reaction, yielding dihydrofolate (DHF) as a by-product. This enzymatic reaction provides an intracellular de novo source of dTMP, an essential precursor for DNA biosynthesis. The polypeptide is Thymidylate synthase (Paracidovorax citrulli (strain AAC00-1) (Acidovorax citrulli)).